A 60-amino-acid polypeptide reads, in one-letter code: Large ribosomal subunit protein uL30 (60 aa).

It belongs to the universal ribosomal protein uL30 family. Part of the 50S ribosomal subunit.

In Albidiferax ferrireducens (strain ATCC BAA-621 / DSM 15236 / T118) (Rhodoferax ferrireducens), this protein is Large ribosomal subunit protein uL30.